Here is a 162-residue protein sequence, read N- to C-terminus: NADH-quinone oxidoreductase subunit I (162 aa).

2 consecutive 4Fe-4S ferredoxin-type domains span residues 54-83 (RRYENGEERCIACKLCEAVCPALAITIESE) and 93-122 (TRYDIDLTKCIFCGFCEESCPVDSIVETQI). Positions 63, 66, 69, 73, 102, 105, 108, and 112 each coordinate [4Fe-4S] cluster.

Belongs to the complex I 23 kDa subunit family. In terms of assembly, NDH-1 is composed of 14 different subunits. Subunits NuoA, H, J, K, L, M, N constitute the membrane sector of the complex. Requires [4Fe-4S] cluster as cofactor.

It is found in the cell inner membrane. The catalysed reaction is a quinone + NADH + 5 H(+)(in) = a quinol + NAD(+) + 4 H(+)(out). Its function is as follows. NDH-1 shuttles electrons from NADH, via FMN and iron-sulfur (Fe-S) centers, to quinones in the respiratory chain. The immediate electron acceptor for the enzyme in this species is believed to be ubiquinone. Couples the redox reaction to proton translocation (for every two electrons transferred, four hydrogen ions are translocated across the cytoplasmic membrane), and thus conserves the redox energy in a proton gradient. In Burkholderia pseudomallei (strain 668), this protein is NADH-quinone oxidoreductase subunit I.